A 745-amino-acid polypeptide reads, in one-letter code: Mediator of RNA polymerase II transcription subunit 25 (745 aa).

Residues 1-226 (MVPGSEGPAR…PRHMVLVRGL (226 aa)) are interaction with the Mediator complex. Residues 233-243 (SSTSGSLQTKQ) are compositionally biased toward polar residues. Disordered regions lie at residues 233-266 (SSTSGSLQTKQAVPLPPAPASAATLSAAPPQALP) and 299-374 (LGPR…VTPG). Over residues 252–262 (ASAATLSAAPP) the composition is skewed to low complexity. A compositionally biased stretch (pro residues) spans 324 to 342 (PAPPLAPVPPGAPKPPPAS). The segment at 389–543 (LGGQQSVSNK…VNGIRQVITN (155 aa)) is interaction with VP16. The segment at 395–545 (VSNKLLAWSG…GIRQVITNHK (151 aa)) is interaction with CREBBP. Interaction with RARA regions lie at residues 563–652 (APPV…LLNP) and 639–705 (PGAN…WPTQ). The segment at 584–738 (LRAPQPQPQG…PGLQPSVMED (155 aa)) is disordered. Residues 596–617 (GASAATGQPQPQGATQAPTGAP) are compositionally biased toward low complexity. The span at 618 to 631 (QGPPGAAPGPPPSG) shows a compositional bias: pro residues. Residues 645–649 (LRSLL) carry the LXXLL motif motif. Positions 652 to 663 (PAPPQTGVPPPQ) are enriched in pro residues. Asymmetric dimethylarginine is present on arginine 723.

Belongs to the Mediator complex subunit 25 family. Component of the Mediator complex, which is composed of MED1, MED4, MED6, MED7, MED8, MED9, MED10, MED11, MED12, MED13, MED13L, MED14, MED15, MED16, MED17, MED18, MED19, MED20, MED21, MED22, MED23, MED24, MED25, MED26, MED27, MED29, MED30, MED31, CCNC, CDK8 and CDC2L6/CDK11. The MED12, MED13, CCNC and CDK8 subunits form a distinct module termed the CDK8 module. Mediator containing the CDK8 module is less active than Mediator lacking this module in supporting transcriptional activation. Individual preparations of the Mediator complex lacking one or more distinct subunits have been variously termed ARC, CRSP, DRIP, PC2, SMCC and TRAP. Interacts with CREBBP. Interacts with ESR1, GR and THRB in a ligand-dependent fashion. Binds the Herpes simplex virus activator VP16. Interacts with RARA and RXRA in a ligand-dependent fashion.

The protein localises to the nucleus. Functionally, component of the Mediator complex, a coactivator involved in the regulated transcription of nearly all RNA polymerase II-dependent genes. Mediator functions as a bridge to convey information from gene-specific regulatory proteins to the basal RNA polymerase II transcription machinery. Mediator is recruited to promoters by direct interactions with regulatory proteins and serves as a scaffold for the assembly of a functional preinitiation complex with RNA polymerase II and the general transcription factors. Required for RARA/RXRA-mediated transcription. The chain is Mediator of RNA polymerase II transcription subunit 25 (Med25) from Mus musculus (Mouse).